We begin with the raw amino-acid sequence, 246 residues long: 2-deoxyglucose-6-phosphate phosphatase 1 (246 aa).

The active-site Nucleophile is the Asp83. Asp83 provides a ligand contact to Mg(2+). Substrate is bound by residues Asp83, Glu92, and 146 to 149 (DVKN). Position 183 (Asp183) interacts with Mg(2+).

It belongs to the HAD-like hydrolase superfamily. DOG/GPP family. It depends on Mg(2+) as a cofactor.

The enzyme catalyses 2-deoxy-D-glucose 6-phosphate + H2O = 2-deoxy-D-glucose + phosphate. Its function is as follows. Phosphatase that is active on 2-deoxy-D-glucose 6-phosphate (2-DOG-6P), as well as on fructose-1-P. This chain is 2-deoxyglucose-6-phosphate phosphatase 1, found in Saccharomyces cerevisiae (strain ATCC 204508 / S288c) (Baker's yeast).